A 428-amino-acid chain; its full sequence is MSRSSDLFHKAQTIIPGGVNSPVRAFKGVGGEPVFFKSGKGAYLTDVDDKQYIDYVGSWGPLILGHCHPKVIEAVDNVLHSGMSFGAPTELEIQLAEKIASLMPSIEKIRMVNSGTEATMTAIRLARGFTNKNKFIKFNGCYHGHSDSLLVKAGSGLLTLGIPSTPGIPKSITEHTLTADFNNLEQVAQLFEKYPNDIATVILEPVPGNMGFILPKIEFLKGLRELCDQYNALLIFDEVMTGFRVGLHGAQGLFGIKPDITTLGKIIGGGMPVGALGGKREIMSFLAPEGPVYQAGTLSGNPLAMAAGLATLKEIEKINFFEDLSNTTNKLTEALADAAENANIPFFAASLGGMFGFCFTDKNSVENYFDVASSDEVLFKKFFHAMLAQGVYFAPSMYEAGFVSSMHGDLEIQKTYDAAELVLNQLSA.

Lys265 bears the N6-(pyridoxal phosphate)lysine mark.

It belongs to the class-III pyridoxal-phosphate-dependent aminotransferase family. HemL subfamily. Homodimer. The cofactor is pyridoxal 5'-phosphate.

It localises to the cytoplasm. It carries out the reaction (S)-4-amino-5-oxopentanoate = 5-aminolevulinate. It functions in the pathway porphyrin-containing compound metabolism; protoporphyrin-IX biosynthesis; 5-aminolevulinate from L-glutamyl-tRNA(Glu): step 2/2. The sequence is that of Glutamate-1-semialdehyde 2,1-aminomutase from Legionella pneumophila (strain Paris).